The primary structure comprises 325 residues: GMP reductase (325 aa).

The active-site Thioimidate intermediate is cysteine 174. 203-226 (IIADGGIRTNGDIAKSIRFGANMV) lines the NADP(+) pocket.

The protein belongs to the IMPDH/GMPR family. GuaC type 2 subfamily.

It catalyses the reaction IMP + NH4(+) + NADP(+) = GMP + NADPH + 2 H(+). Functionally, catalyzes the irreversible NADPH-dependent deamination of GMP to IMP. It functions in the conversion of nucleobase, nucleoside and nucleotide derivatives of G to A nucleotides, and in maintaining the intracellular balance of A and G nucleotides. This is GMP reductase from Latilactobacillus sakei subsp. sakei (strain 23K) (Lactobacillus sakei subsp. sakei).